Here is a 709-residue protein sequence, read N- to C-terminus: Bud site selection protein 14 (709 aa).

Ser-2 bears the N-acetylserine mark. Positions 61–258 (DIINNRPTSG…DYQPLSPPRE (198 aa)) are disordered. Composition is skewed to polar residues over residues 62–74 (IINN…SKLT) and 89–107 (VTPT…NILS). Composition is skewed to basic and acidic residues over residues 111 to 123 (EKGH…RDDD) and 131 to 150 (VEKH…KENS). Phosphotyrosine is present on Tyr-159. A phosphoserine mark is found at Ser-160 and Ser-162. Residue Thr-177 is modified to Phosphothreonine. 2 positions are modified to phosphoserine: Ser-212 and Ser-222. Residues 212–226 (SEDEDEEENYSDDDD) are compositionally biased toward acidic residues. An SH3 domain is found at 259–320 (LDPDKLYALY…PAEILETFPE (62 aa)). The disordered stretch occupies residues 334–367 (SSQSVASSDSKDDSISSGNKNQSDAESIIPTPAL). A phosphoserine mark is found at Ser-376, Ser-378, and Ser-401. The span at 396–406 (DTSLDSNDDGG) shows a compositional bias: acidic residues. Disordered stretches follow at residues 396–421 (DTSL…DNDK), 464–510 (NVKK…SDYD), 525–571 (ANGM…SSRA), and 600–680 (ASLG…PASK). The span at 470 to 504 (RQDNKNESEPKTSSSKDREDDYNANRYVGQEKSEP) shows a compositional bias: basic and acidic residues. The residue at position 507 (Ser-507) is a Phosphoserine. Residues 531-552 (SDSQNSLSTIGEFSPSSSEWTN) are compositionally biased toward polar residues. The segment covering 553–569 (ESPSTPIVEESSSIPSS) has biased composition (low complexity). Residues 600-614 (ASLGSSGGMANQTDA) are compositionally biased toward polar residues. The span at 615-633 (EQPKEELEKHHSTPEEEKQ) shows a compositional bias: basic and acidic residues. Residues Ser-655, Ser-658, and Ser-670 each carry the phosphoserine modification. The segment covering 655 to 671 (SSASINSSLSGSRALSN) has biased composition (low complexity).

As to quaternary structure, interacts with GLC7.

Its function is as follows. Important for bud site selection. Seems to be a regulatory subunit of the BUD14-GLC7 type-I phosphatase complex. The BUD14-GLC7 complex is necessary to regulate microtubule dynamics at the cortex and may function as a specific activator of the dynein complex. This is Bud site selection protein 14 (BUD14) from Saccharomyces cerevisiae (strain ATCC 204508 / S288c) (Baker's yeast).